We begin with the raw amino-acid sequence, 255 residues long: Post-GPI attachment to proteins factor 2 (255 aa).

A run of 6 helical transmembrane segments spans residues 25–45 (LAAL…SLLF), 80–100 (LAIF…LEYY), 111–131 (LGIL…CLSF), 143–163 (NAFV…YLLN), 185–205 (LFLV…RHNA), and 209–229 (AGVY…NMGF).

This sequence belongs to the PGAP2 family.

It is found in the golgi apparatus membrane. The protein resides in the endoplasmic reticulum membrane. In terms of biological role, involved in the lipid remodeling steps of GPI-anchor maturation. Required for stable expression of GPI-anchored proteins at the cell surface. In Drosophila pseudoobscura pseudoobscura (Fruit fly), this protein is Post-GPI attachment to proteins factor 2.